The primary structure comprises 152 residues: Peptide deformylase (152 aa).

Fe cation-binding residues include Cys88 and His130. Glu131 is an active-site residue. His134 is a Fe cation binding site.

It belongs to the polypeptide deformylase family. The cofactor is Fe(2+).

It catalyses the reaction N-terminal N-formyl-L-methionyl-[peptide] + H2O = N-terminal L-methionyl-[peptide] + formate. In terms of biological role, removes the formyl group from the N-terminal Met of newly synthesized proteins. Requires at least a dipeptide for an efficient rate of reaction. N-terminal L-methionine is a prerequisite for activity but the enzyme has broad specificity at other positions. The chain is Peptide deformylase from Carboxydothermus hydrogenoformans (strain ATCC BAA-161 / DSM 6008 / Z-2901).